A 267-amino-acid chain; its full sequence is 4-hydroxy-tetrahydrodipicolinate reductase (267 aa).

NAD(+)-binding positions include 8-13 (GAAGRM), E34, 98-100 (GST), and 122-125 (APNM). The active-site Proton donor/acceptor is the H155. H156 provides a ligand contact to (S)-2,3,4,5-tetrahydrodipicolinate. K159 functions as the Proton donor in the catalytic mechanism. 165 to 166 (GT) contacts (S)-2,3,4,5-tetrahydrodipicolinate.

It belongs to the DapB family.

It is found in the cytoplasm. The catalysed reaction is (S)-2,3,4,5-tetrahydrodipicolinate + NAD(+) + H2O = (2S,4S)-4-hydroxy-2,3,4,5-tetrahydrodipicolinate + NADH + H(+). The enzyme catalyses (S)-2,3,4,5-tetrahydrodipicolinate + NADP(+) + H2O = (2S,4S)-4-hydroxy-2,3,4,5-tetrahydrodipicolinate + NADPH + H(+). It functions in the pathway amino-acid biosynthesis; L-lysine biosynthesis via DAP pathway; (S)-tetrahydrodipicolinate from L-aspartate: step 4/4. Catalyzes the conversion of 4-hydroxy-tetrahydrodipicolinate (HTPA) to tetrahydrodipicolinate. In Syntrophotalea carbinolica (strain DSM 2380 / NBRC 103641 / GraBd1) (Pelobacter carbinolicus), this protein is 4-hydroxy-tetrahydrodipicolinate reductase.